The chain runs to 278 residues: Protein U52 (278 aa).

A compositionally biased stretch (polar residues) spans 1 to 18; sequence MTRVSSVSASCTTTNPPK. The disordered stretch occupies residues 1 to 25; it reads MTRVSSVSASCTTTNPPKNTREDMS.

This sequence belongs to the herpesviridae UL79 family.

This chain is Protein U52, found in Elephas maximus (Indian elephant).